Consider the following 264-residue polypeptide: Mannose-specific lectin CEA (264 aa).

Residues 1 to 23 (MAKLLLFLLPAILGLLVPRSAVA) form the signal peptide. 2 consecutive Bulb-type lectin domains span residues 26 to 131 (TNYL…PWVP) and 145 to 252 (NNLL…PQAK). Residues 51–55 (QDDCN), Tyr59, Trp63, Gln64, 170–174 (QGDCN), Tyr178, and 182–185 (YGWQ) each bind beta-D-mannose. A Carbohydrate-binding motif 1 motif is present at residues 51-59 (QDDCNLVLY). 2 disulfides stabilise this stretch: Cys54–Cys74 and Cys173–Cys195. Positions 170–178 (QGDCNLVLY) match the Carbohydrate-binding motif 2 motif.

As to quaternary structure, forms heterotetramer of 2 chains 1 and 2 chains 2 arranged as a dimer of chain 1 and chain 2 heterodimers.

Its subcellular location is the secreted. Functionally, mannose-specific lectin. Shows agglutinating activity towards erythrocytes from rabbit. Has insecticidal activity against cotton aphids and other hemipteran insects. This chain is Mannose-specific lectin CEA, found in Colocasia esculenta (Wild taro).